The sequence spans 207 residues: Frataxin, mitochondrial (207 aa).

The transit peptide at 1 to 40 (MWAFGGRAAVGLLPRTASRASAWVGNPRWREPIVTCGRRG) directs the protein to the mitochondrion.

The protein belongs to the frataxin family. Component of the mitochondrial core iron-sulfur cluster (ISC) complex composed of NFS1, LYRM4, NDUFAB1, ISCU, FXN, and FDX2; this complex is a heterohexamer containing two copies of each monomer. Homodimer. Monomer (probable predominant form). Oligomer. Monomers and polymeric aggregates of &gt;1 MDa have been isolated from mitochondria. A small fraction of heterologous overexpressed recombinant frataxin forms high-molecular weight aggregates that incorporate iron. Interacts with LYRM4. Interacts (via ferrous form) with ISCU; the interaction is possible when both are bound to the dimeric form of the cysteine desulfurase complex (NFS1:LYRM4) and the interaction enhances FXN interaction to the dimeric form of the cysteine desulfurase complex (NFS1:LYRM4). Interacts with FECH; one iron-bound FXN monomer seems to interact with a FECH homodimer. Interacts with SDHA and SDHB. Interacts with ACO2; the interaction is dependent on citrate. Interacts with HSPA9. Component of a complex composed of FXN, NFS1, LYRM4 and ISCU. In terms of assembly, interacts with ACO1. Interacts with ISCU (cytoplasmic form). In terms of processing, processed in two steps by mitochondrial processing peptidase (MPP). MPP first cleaves the precursor to intermediate form and subsequently converts the intermediate to yield frataxin mature form (frataxin(81-210)) which is the predominant form. The additional forms, frataxin(56-210) and frataxin(78-210), seem to be produced when the normal maturation process is impaired; their physiological relevance is unsure. In terms of tissue distribution, heart, liver, skeletal muscle, kidney, spleen and thymus. Weakly expressed in the brain and lung.

It is found in the mitochondrion. The protein resides in the cytoplasm. The protein localises to the cytosol. It carries out the reaction 4 Fe(2+) + O2 + 4 H(+) = 4 Fe(3+) + 2 H2O. Its function is as follows. Functions as an activator of persulfide transfer to the scaffoding protein ISCU as component of the core iron-sulfur cluster (ISC) assembly complex and participates to the [2Fe-2S] cluster assembly. Accelerates sulfur transfer from NFS1 persulfide intermediate to ISCU and to small thiols such as L-cysteine and glutathione leading to persulfuration of these thiols and ultimately sulfide release. Binds ferrous ion and is released from FXN upon the addition of both L-cysteine and reduced FDX2 during [2Fe-2S] cluster assembly. The core iron-sulfur cluster (ISC) assembly complex is involved in the de novo synthesis of a [2Fe-2S] cluster, the first step of the mitochondrial iron-sulfur protein biogenesis. This process is initiated by the cysteine desulfurase complex (NFS1:LYRM4:NDUFAB1) that produces persulfide which is delivered on the scaffold protein ISCU in a FXN-dependent manner. Then this complex is stabilized by FDX2 which provides reducing equivalents to accomplish the [2Fe-2S] cluster assembly. Finally, the [2Fe-2S] cluster is transferred from ISCU to chaperone proteins, including HSCB, HSPA9 and GLRX5. May play a role in the protection against iron-catalyzed oxidative stress through its ability to catalyze the oxidation of Fe(2+) to Fe(3+); the oligomeric form but not the monomeric form has in vitro ferroxidase activity. May be able to store large amounts of iron in the form of a ferrihydrite mineral by oligomerization; however, the physiological relevance is unsure as reports are conflicting and the function has only been shown using heterologous overexpression systems. May function as an iron chaperone protein that protects the aconitase [4Fe-4S]2+ cluster from disassembly and promotes enzyme reactivation. May play a role as a high affinity iron binding partner for FECH that is capable of both delivering iron to ferrochelatase and mediating the terminal step in mitochondrial heme biosynthesis. Functionally, modulates the RNA-binding activity of ACO1. May be involved in the cytoplasmic iron-sulfur protein biogenesis. May contribute to oxidative stress resistance and overall cell survival. This is Frataxin, mitochondrial from Mus musculus (Mouse).